The sequence spans 209 residues: Urease accessory protein UreG (209 aa).

18–25 (GPVGSGKT) is a GTP binding site.

The protein belongs to the SIMIBI class G3E GTPase family. UreG subfamily. Homodimer. UreD, UreF and UreG form a complex that acts as a GTP-hydrolysis-dependent molecular chaperone, activating the urease apoprotein by helping to assemble the nickel containing metallocenter of UreC. The UreE protein probably delivers the nickel.

It localises to the cytoplasm. Functionally, facilitates the functional incorporation of the urease nickel metallocenter. This process requires GTP hydrolysis, probably effectuated by UreG. The chain is Urease accessory protein UreG from Cupriavidus pinatubonensis (strain JMP 134 / LMG 1197) (Cupriavidus necator (strain JMP 134)).